The chain runs to 476 residues: Glutamyl-tRNA(Gln) amidotransferase subunit A (476 aa).

Active-site charge relay system residues include Lys-77 and Ser-152. Residue Ser-176 is the Acyl-ester intermediate of the active site.

Belongs to the amidase family. GatA subfamily. Heterotrimer of A, B and C subunits.

It catalyses the reaction L-glutamyl-tRNA(Gln) + L-glutamine + ATP + H2O = L-glutaminyl-tRNA(Gln) + L-glutamate + ADP + phosphate + H(+). Functionally, allows the formation of correctly charged Gln-tRNA(Gln) through the transamidation of misacylated Glu-tRNA(Gln) in organisms which lack glutaminyl-tRNA synthetase. The reaction takes place in the presence of glutamine and ATP through an activated gamma-phospho-Glu-tRNA(Gln). This chain is Glutamyl-tRNA(Gln) amidotransferase subunit A, found in Acidobacterium capsulatum (strain ATCC 51196 / DSM 11244 / BCRC 80197 / JCM 7670 / NBRC 15755 / NCIMB 13165 / 161).